A 690-amino-acid polypeptide reads, in one-letter code: Methionine--tRNA ligase (690 aa).

A 'HIGH' region motif is present at residues 20–30 (PYANGSIHLGH). Zn(2+) is bound by residues Cys151, Cys154, Cys164, and Cys167. The 'KMSKS' region signature appears at 337–341 (KMSKS). Residue Lys340 participates in ATP binding. Residues 589–690 (DFAKVDLRIA…EGAQPGMRVM (102 aa)) enclose the tRNA-binding domain.

Belongs to the class-I aminoacyl-tRNA synthetase family. MetG type 1 subfamily. As to quaternary structure, homodimer. Zn(2+) serves as cofactor.

Its subcellular location is the cytoplasm. It carries out the reaction tRNA(Met) + L-methionine + ATP = L-methionyl-tRNA(Met) + AMP + diphosphate. Functionally, is required not only for elongation of protein synthesis but also for the initiation of all mRNA translation through initiator tRNA(fMet) aminoacylation. The sequence is that of Methionine--tRNA ligase from Vibrio vulnificus (strain CMCP6).